A 294-amino-acid chain; its full sequence is 4-hydroxy-tetrahydrodipicolinate synthase (294 aa).

Threonine 44 lines the pyruvate pocket. Tyrosine 132 functions as the Proton donor/acceptor in the catalytic mechanism. Lysine 161 acts as the Schiff-base intermediate with substrate in catalysis. Isoleucine 206 provides a ligand contact to pyruvate.

This sequence belongs to the DapA family. Homotetramer; dimer of dimers.

It localises to the cytoplasm. The enzyme catalyses L-aspartate 4-semialdehyde + pyruvate = (2S,4S)-4-hydroxy-2,3,4,5-tetrahydrodipicolinate + H2O + H(+). It participates in amino-acid biosynthesis; L-lysine biosynthesis via DAP pathway; (S)-tetrahydrodipicolinate from L-aspartate: step 3/4. Catalyzes the condensation of (S)-aspartate-beta-semialdehyde [(S)-ASA] and pyruvate to 4-hydroxy-tetrahydrodipicolinate (HTPA). This chain is 4-hydroxy-tetrahydrodipicolinate synthase, found in Thermotoga sp. (strain RQ2).